A 760-amino-acid polypeptide reads, in one-letter code: Ferric/cupric reductase transmembrane component 1 (760 aa).

An N-terminal signal peptide occupies residues 1–18 (MKIQQLIVFLFAVVLIDA). The Extracellular portion of the chain corresponds to 19 to 212 (RTPKRYSELD…NNNFNLSINY (194 aa)). 6 N-linked (GlcNAc...) asparagine glycosylation sites follow: Asn-78, Asn-91, Asn-111, Asn-143, Asn-155, and Asn-207. The tract at residues 119–177 (TTKSSSGSKTSASASKSSKSTGSSNASKSSTNAHGSNSSTSSTSSSSSKSGKGNSGTST) is disordered. The chain crosses the membrane as a helical span at residues 213-233 (GSGLLGYWAGILAIAIFANMI). The Cytoplasmic portion of the chain corresponds to 234–288 (KKMFPSLTNYLSGSISNLFRKHLFLPATFRKKKAQEFSIGVYGFFDGLIPTRLET). The helical transmembrane segment at 289–309 (IIVVIFVVLTGLFSALHIHHV) threads the bilayer. The Extracellular portion of the chain corresponds to 310-324 (KDNPQYATKNAELGH). The helical transmembrane segment at 325-345 (LIADRTGILGTFLIPLLILFG) threads the bilayer. In terms of domain architecture, Ferric oxidoreductase spans 330–445 (TGILGTFLIP…HIVLVVFFVV (116 aa)). At 346-371 (GRNNFLQWLTGWDFATFIMYHRWISR) the chain is on the cytoplasmic side. Residues His-366 and His-380 each coordinate heme. Residues 372 to 392 (VDVLLIIVHAITFSVSDKATG) form a helical membrane-spanning segment. Residues 393-403 (KYNTRMKRDFM) are Extracellular-facing. A helical membrane pass occupies residues 404–424 (IWGTVSTICGGFILFQAMLFF). Residues 425–430 (RRKCYE) lie on the Cytoplasmic side of the membrane. A helical membrane pass occupies residues 431-451 (VFFLIHIVLVVFFVVGGYYHL). The heme site is built by His-436 and His-450. Topologically, residues 452 to 760 (ESQGYGDFMW…EYHEQLQTWA (309 aa)) are extracellular. The FAD-binding FR-type domain occupies 465–583 (AVWAFDRVVR…EGPYGEPSSA (119 aa)). An NADP(+)-binding site is contributed by 575–578 (GPYG). N-linked (GlcNAc...) asparagine glycosylation is present at Asn-615. 726-727 (CG) is an NADP(+) binding site. The N-linked (GlcNAc...) asparagine glycan is linked to Asn-744.

This sequence belongs to the ferric reductase (FRE) family. Requires FAD as cofactor. The cofactor is heme.

Its subcellular location is the cell membrane. The enzyme catalyses 2 a Fe(II)-siderophore + NADP(+) + H(+) = 2 a Fe(III)-siderophore + NADPH. Its function is as follows. Ferric reductase responsible for reducing extracellular iron and copper prior to import. Catalyzes the reductive uptake of Fe(3+)-salts and Fe(3+) bound to catecholate or hydroxamate siderophores. Fe(3+) is reduced to Fe(2+), which then dissociates from the siderophore and can be imported by the high-affinity Fe(2+) transport complex in the plasma membrane. Also participates in Cu(2+) reduction and Cu(+) uptake. Involved in maintenance of cell wall integrity (CWI), mitochondrial function, and interaction between the pathogen and the host. The chain is Ferric/cupric reductase transmembrane component 1 from Candida albicans (strain SC5314 / ATCC MYA-2876) (Yeast).